Here is a 313-residue protein sequence, read N- to C-terminus: Olfactory receptor 10G3 (313 aa).

Over 1-25 (MERINSTLLTAFILTGIPYPLRLRT) the chain is Extracellular. Residue Asn5 is glycosylated (N-linked (GlcNAc...) asparagine). A helical membrane pass occupies residues 26 to 46 (LFFVFFFLIYILTQLGNLLIL). At 47–54 (ITVWADPR) the chain is on the cytoplasmic side. A helical membrane pass occupies residues 55-76 (LHARPMYIFLGVLSVIDMSISS). Topologically, residues 77–100 (IIVPRLMMNFTLGVKPIPFGGCVA) are extracellular. The N-linked (GlcNAc...) asparagine glycan is linked to Asn85. A disulfide bridge links Cys98 with Cys190. Residues 101-121 (QLYFYHFLGSTQCFLYTLMAY) form a helical membrane-spanning segment. The Cytoplasmic portion of the chain corresponds to 122-140 (DRYLAICQPLRYPVLMTAK). The helical transmembrane segment at 141–161 (LSALLVAGAWMAGSIHGALQA) threads the bilayer. Over 162-198 (ILTFRLPYCGPNQVDYFFCDIPAVLRLACADTTVNEL) the chain is Extracellular. The chain crosses the membrane as a helical span at residues 199–218 (VTFVDIGVVVASCFSLILLS). The Cytoplasmic portion of the chain corresponds to 219–238 (YIQIIQAILRIHTADGRRRA). A helical transmembrane segment spans residues 239-259 (FSTCGAHVTVVTVYYVPCAFI). The Extracellular segment spans residues 260-270 (YLRPETNSPLD). A helical transmembrane segment spans residues 271–291 (GAAALVPTAITPFLNPLIYTL). Residues 292–313 (RNQEVKLALKRMLRSPRTPSEV) lie on the Cytoplasmic side of the membrane.

This sequence belongs to the G-protein coupled receptor 1 family.

The protein localises to the cell membrane. In terms of biological role, odorant receptor. The chain is Olfactory receptor 10G3 (OR10G3) from Homo sapiens (Human).